The following is a 197-amino-acid chain: Holliday junction branch migration complex subunit RuvA (197 aa).

Residues 1–64 are domain I; that stretch reads MIGRLRGIVA…EDSVSLYGFL (64 aa). The interval 65–143 is domain II; sequence REGERRLFRD…QFGAGGALPT (79 aa). The flexible linker stretch occupies residues 144–153; the sequence is GSGPAPADPL. Positions 153–197 are domain III; the sequence is LSDATVALQQLGYKPAEAARMARDAFNEGDEVATVIRKALQSALR.

It belongs to the RuvA family. Homotetramer. Forms an RuvA(8)-RuvB(12)-Holliday junction (HJ) complex. HJ DNA is sandwiched between 2 RuvA tetramers; dsDNA enters through RuvA and exits via RuvB. An RuvB hexamer assembles on each DNA strand where it exits the tetramer. Each RuvB hexamer is contacted by two RuvA subunits (via domain III) on 2 adjacent RuvB subunits; this complex drives branch migration. In the full resolvosome a probable DNA-RuvA(4)-RuvB(12)-RuvC(2) complex forms which resolves the HJ.

The protein localises to the cytoplasm. In terms of biological role, the RuvA-RuvB-RuvC complex processes Holliday junction (HJ) DNA during genetic recombination and DNA repair, while the RuvA-RuvB complex plays an important role in the rescue of blocked DNA replication forks via replication fork reversal (RFR). RuvA specifically binds to HJ cruciform DNA, conferring on it an open structure. The RuvB hexamer acts as an ATP-dependent pump, pulling dsDNA into and through the RuvAB complex. HJ branch migration allows RuvC to scan DNA until it finds its consensus sequence, where it cleaves and resolves the cruciform DNA. In Stenotrophomonas maltophilia (strain K279a), this protein is Holliday junction branch migration complex subunit RuvA.